The primary structure comprises 1369 residues: Rho guanine nucleotide exchange factor 10 (1369 aa).

The segment at 1–106 (MRPPGFLSRA…ETTPVAEPTK (106 aa)) is disordered. Positions 46 to 64 (NNEEEEGEQFDFDSGDEIP) are enriched in acidic residues. The span at 83 to 100 (EAPAPTGGEDGAGAETTP) shows a compositional bias: low complexity. The residue at position 180 (Ser-180) is a Phosphoserine. Residues 184–254 (EAETPEVTED…ENSDSEPDEM (71 aa)) are disordered. Positions 196–209 (PNSLSSEEPPTSED) are enriched in polar residues. Residues 304 to 355 (KKQLSHDLTRLKEHYEKKMRDLMASTVGVVEIQQLRQKHELKMQKLVKAAKD) adopt a coiled-coil conformation. At Ser-379 the chain carries Phosphoserine. Residues 421-608 (VRRYILGSVV…ETLAEKLNER (188 aa)) enclose the DH domain. 2 disordered regions span residues 1226–1260 (KDKS…LSQG) and 1277–1297 (QKSD…SSSL). A compositionally biased stretch (low complexity) spans 1279-1296 (SDLSSSSGSLSLSHGSSS). Residue Ser-1287 is modified to Phosphoserine. Gln-1338 is subject to N5-methylglutamine.

Methylated at Gln-1338 by N6AMT1.

Functionally, may play a role in developmental myelination of peripheral nerves. This Homo sapiens (Human) protein is Rho guanine nucleotide exchange factor 10 (ARHGEF10).